Here is a 755-residue protein sequence, read N- to C-terminus: uncharacterized protein (755 aa).

7 disordered regions span residues 1–44 (MAAP…AAAQ), 72–91 (AEHS…ATAQ), 99–174 (FSLS…IPHY), 393–467 (TTNV…SSSR), 523–545 (LPKT…EGGG), 584–672 (VSSS…LPSG), and 734–755 (QAAT…PRRK). Composition is skewed to low complexity over residues 10–25 (TTTQ…TTTT) and 35–44 (TTTGSGAAAQ). 3 stretches are compositionally biased toward low complexity: residues 112–130 (ISSS…NASS), 139–151 (SPDL…LSGS), and 393–412 (TTNV…TKST). The segment covering 429-446 (IEEDTIQFDDPGQGEDDN) has biased composition (acidic residues). The span at 452 to 462 (NTPPPPGPPPN) shows a compositional bias: pro residues. Gly residues predominate over residues 536–545 (ATGGVTEGGG). The span at 590 to 599 (LPQPQVATTI) shows a compositional bias: polar residues. 2 stretches are compositionally biased toward low complexity: residues 600-666 (TPQA…QTPQ) and 740-755 (SQPS…PRRK).

This sequence belongs to the chlamydial CPn_0572/CT_456/TC_0741 family.

This is an uncharacterized protein from Chlamydia pneumoniae (Chlamydophila pneumoniae).